The chain runs to 358 residues: Adenosine deaminase (358 aa).

Zn(2+) contacts are provided by H14 and H16. Substrate is bound by residues H16, D18, and G183. H212 lines the Zn(2+) pocket. E215 serves as the catalytic Proton donor. D294 contributes to the Zn(2+) binding site. Residue D295 coordinates substrate.

Belongs to the metallo-dependent hydrolases superfamily. Adenosine and AMP deaminases family. Zn(2+) serves as cofactor.

It localises to the cell membrane. The protein localises to the cell junction. The protein resides in the cytoplasmic vesicle lumen. It is found in the cytoplasm. Its subcellular location is the lysosome. It carries out the reaction adenosine + H2O + H(+) = inosine + NH4(+). It catalyses the reaction 2'-deoxyadenosine + H2O + H(+) = 2'-deoxyinosine + NH4(+). Its function is as follows. Catalyzes the hydrolytic deamination of adenosine and 2-deoxyadenosine. Plays an important role in purine metabolism and in adenosine homeostasis. Modulates signaling by extracellular adenosine, and so contributes indirectly to cellular signaling events. May act as a positive regulator of T-cell coactivation. The protein is Adenosine deaminase (ada) of Xenopus laevis (African clawed frog).